Reading from the N-terminus, the 683-residue chain is Amphiphysin (683 aa).

2 coiled-coil regions span residues alanine 10 to glutamate 83 and aspartate 144 to leucine 191. The BAR domain maps to valine 24–aspartate 240. 3 disordered regions span residues serine 244–proline 311, alanine 421–proline 443, and glutamate 455–serine 599. Position 252 is a phosphoserine (serine 252). Threonine 260 carries the phosphothreonine modification. Residues proline 261–threonine 274 are compositionally biased toward pro residues. 4 positions are modified to phosphoserine: serine 262, serine 268, serine 272, and serine 276. Threonine 280 carries the post-translational modification Phosphothreonine. Composition is skewed to low complexity over residues glutamate 424 to proline 443 and alanine 468 to serine 477. Phosphoserine is present on serine 496. The span at serine 539–threonine 559 shows a compositional bias: basic and acidic residues. Over residues alanine 585–alanine 596 the composition is skewed to low complexity. An SH3 domain is found at glycine 610 to glutamate 683. Serine 626 is modified (phosphoserine).

In terms of assembly, heterodimer with BIN1. Binds SH3GLB1. Interacts with REPS1 and SGIP1. Binds AP2A2. Interacts with AP2B1. Interacts with DNM1 and SYNJ1.

It localises to the cytoplasmic vesicle. The protein resides in the secretory vesicle. Its subcellular location is the synaptic vesicle membrane. The protein localises to the cytoplasm. It is found in the cytoskeleton. May participate in mechanisms of regulated exocytosis in synapses and certain endocrine cell types. May control the properties of the membrane associated cytoskeleton. This is Amphiphysin (Amph) from Rattus norvegicus (Rat).